Here is a 420-residue protein sequence, read N- to C-terminus: Phosphoribosylamine--glycine ligase (420 aa).

One can recognise an ATP-grasp domain in the interval 108–314; sequence KQFMEKYAIP…FAALIDALLH (207 aa). 134-195 provides a ligand contact to ATP; sequence LNERGVPIVI…EDFLAGEEFS (62 aa). The Mg(2+) site is built by Glu-284 and Asn-286.

This sequence belongs to the GARS family. Requires Mg(2+) as cofactor. The cofactor is Mn(2+).

It catalyses the reaction 5-phospho-beta-D-ribosylamine + glycine + ATP = N(1)-(5-phospho-beta-D-ribosyl)glycinamide + ADP + phosphate + H(+). Its pathway is purine metabolism; IMP biosynthesis via de novo pathway; N(1)-(5-phospho-D-ribosyl)glycinamide from 5-phospho-alpha-D-ribose 1-diphosphate: step 2/2. The polypeptide is Phosphoribosylamine--glycine ligase (Listeria monocytogenes serovar 1/2a (strain ATCC BAA-679 / EGD-e)).